The primary structure comprises 360 residues: Probable protein phosphatase 2C 54 (360 aa).

The disordered stretch occupies residues 1-39 (MCVEESEGAERLDFGEPAAAAADAGKSKSKSPDELPSPR). Positions 65-325 (RSGDWSDIGG…DNLTAVLVSF (261 aa)) constitute a PPM-type phosphatase domain. The Mn(2+) site is built by Asp-109, Gly-110, Asp-273, and Asp-316.

The protein belongs to the PP2C family. Mg(2+) serves as cofactor. Mn(2+) is required as a cofactor.

It carries out the reaction O-phospho-L-seryl-[protein] + H2O = L-seryl-[protein] + phosphate. The enzyme catalyses O-phospho-L-threonyl-[protein] + H2O = L-threonyl-[protein] + phosphate. The sequence is that of Probable protein phosphatase 2C 54 from Oryza sativa subsp. japonica (Rice).